Reading from the N-terminus, the 221-residue chain is Chaperone protein TorD (221 aa).

The protein belongs to the TorD/DmsD family. TorD subfamily.

It localises to the cytoplasm. Its function is as follows. Involved in the biogenesis of TorA. Acts on TorA before the insertion of the molybdenum cofactor and, as a result, probably favors a conformation of the apoenzyme that is competent for acquiring the cofactor. The chain is Chaperone protein TorD from Psychrobacter sp. (strain PRwf-1).